A 449-amino-acid chain; its full sequence is Mitochondrial distribution and morphology protein 10 (449 aa).

Disordered stretches follow at residues 215 to 244 and 282 to 307; these read GPSEPVEDSEKSTAAPTKTRSGVKRIDEED and DATPPSFQLPSSSPTQPSLLAHGAPS. The segment covering 285–301 has biased composition (low complexity); the sequence is PPSFQLPSSSPTQPSLL.

This sequence belongs to the MDM10 family. Component of the ER-mitochondria encounter structure (ERMES) or MDM complex, composed of MMM1, MDM10, MDM12 and MDM34. Associates with the mitochondrial outer membrane sorting assembly machinery SAM(core) complex.

It is found in the mitochondrion outer membrane. In terms of biological role, component of the ERMES/MDM complex, which serves as a molecular tether to connect the endoplasmic reticulum and mitochondria. Components of this complex are involved in the control of mitochondrial shape and protein biogenesis and may function in phospholipid exchange. MDM10 is involved in the late assembly steps of the general translocase of the mitochondrial outer membrane (TOM complex). Functions in the TOM40-specific route of the assembly of outer membrane beta-barrel proteins, including the association of TOM40 with the receptor TOM22 and small TOM proteins. Can associate with the SAM(core) complex as well as the MDM12-MMM1 complex, both involved in late steps of the major beta-barrel assembly pathway, that is responsible for biogenesis of all outer membrane beta-barrel proteins. May act as a switch that shuttles between both complexes and channels precursor proteins into the TOM40-specific pathway. Plays a role in mitochondrial morphology and in the inheritance of mitochondria. The protein is Mitochondrial distribution and morphology protein 10 of Postia placenta (strain ATCC 44394 / Madison 698-R) (Brown rot fungus).